The chain runs to 374 residues: tRNA-specific 2-thiouridylase MnmA (374 aa).

ATP is bound by residues 17 to 24 and methionine 43; that span reads GMSGGVDS. The interval 103–105 is interaction with target base in tRNA; that stretch reads NPD. The active-site Nucleophile is the cysteine 108. A disulfide bridge connects residues cysteine 108 and cysteine 204. ATP is bound at residue glycine 132. Residues 154–156 are interaction with tRNA; that stretch reads KDQ. The Cysteine persulfide intermediate role is filled by cysteine 204. The interaction with tRNA stretch occupies residues 316–317; sequence RY.

It belongs to the MnmA/TRMU family.

It localises to the cytoplasm. The catalysed reaction is S-sulfanyl-L-cysteinyl-[protein] + uridine(34) in tRNA + AH2 + ATP = 2-thiouridine(34) in tRNA + L-cysteinyl-[protein] + A + AMP + diphosphate + H(+). In terms of biological role, catalyzes the 2-thiolation of uridine at the wobble position (U34) of tRNA, leading to the formation of s(2)U34. This is tRNA-specific 2-thiouridylase MnmA from Pseudomonas entomophila (strain L48).